The chain runs to 313 residues: Proline iminopeptidase (313 aa).

An AB hydrolase-1 domain is found at 35–298 (KPVVILHGGP…TPGAGHSAFE (264 aa)). The Nucleophile role is filled by serine 110. Aspartate 266 is a catalytic residue. The Proton donor role is filled by histidine 294.

Belongs to the peptidase S33 family.

Its subcellular location is the cytoplasm. It catalyses the reaction Release of N-terminal proline from a peptide.. In terms of biological role, specifically catalyzes the removal of N-terminal proline residues from peptides. The chain is Proline iminopeptidase (pip) from Xylella fastidiosa (strain Temecula1 / ATCC 700964).